A 267-amino-acid chain; its full sequence is Membrane-spanning 4-domains subfamily A member 10 (267 aa).

The Cytoplasmic segment spans residues 1–61; that stretch reads MKAEATVIPS…KKSSLLKELG (61 aa). The chain crosses the membrane as a helical span at residues 62 to 82; sequence AFHITIALLHLVFGGYLASIV. Residues 83 to 91 are Extracellular-facing; that stretch reads KNLHLVVLK. The helical transmembrane segment at 92–112 threads the bilayer; the sequence is SWYPFWGAASFLISGILAITM. Residues 113-121 lie on the Cytoplasmic side of the membrane; sequence KTFSKTYLK. A helical transmembrane segment spans residues 122–142; sequence MLCLMTNLISLFCVLSGLFVI. The Extracellular portion of the chain corresponds to 143 to 171; it reads SKDLFLESPFESPIWRMYPNSTVHIQRLE. The chain crosses the membrane as a helical span at residues 172–192; that stretch reads LALLCFTVLELFLPVPTAVTA. The Cytoplasmic segment spans residues 193-267; the sequence is WRGDCPSAKN…GAAIWTQTAN (75 aa).

Belongs to the MS4A family.

The protein resides in the membrane. May be involved in signal transduction as a component of a multimeric receptor complex. The polypeptide is Membrane-spanning 4-domains subfamily A member 10 (MS4A10) (Homo sapiens (Human)).